Here is a 549-residue protein sequence, read N- to C-terminus: MASYAPFIKPYVQYNEHGWGPCEIPDMDVPYQPFCKSDRLGKICDWTVAMQEKKFSNKYASSFGNNSQYAYFHEDDDSTFHLVDTSGSRALKPYQRGRFRPNVRNNARVKGRSGRGPGMLGVAGSMAGGGTTSGSTKYGKGRESRRNQGRRFARNAPSRLRESSVLVRPNWVSLEEIEFPRLLKLALPNIKEGQDIVTCGSLEYYDKLYDRINLRNERPLLKMDRIVHTVTTTDDPVIRRLSKTMGNVFATDEILATIMCCTRSNYSWDVVIEKLGTKVFLDKRDNAQFDLLTVNETSLEPPMDEEGSINSAHSLAMEATLINHNFGQQVLRVGEQEPRFKFGEPNPFEEPGVELACLGYRYRQWQLGNDLVLVARCKHNGVIQGPNGEVQFLSIKALNEWDSKAANSVEWRQKLDTQRGAVLASELRNNACKLARWTVEAVLAGSDQLKLGYVSRVTPRDHLRHVILGTQQFKPQEFATQINLNMDNAWGILRCLVDIVMKQPDGKYLIVKDPNKPMVRLYDIPENSFDSDAEDEENSSEPFANSLDN.

The tract at residues 107-157 (ARVKGRSGRGPGMLGVAGSMAGGGTTSGSTKYGKGRESRRNQGRRFARNAP) is disordered. Residues 114 to 132 (GRGPGMLGVAGSMAGGGTT) are compositionally biased toward gly residues. Residues 288–302 (QFDLLTVNETSLEPP) are RNA gate. Residues 527–549 (NSFDSDAEDEENSSEPFANSLDN) form a disordered region. A compositionally biased stretch (acidic residues) spans 529 to 539 (FDSDAEDEENS).

Belongs to the eIF-3 subunit D family. As to quaternary structure, component of the eukaryotic translation initiation factor 3 (eIF-3) complex. The eIF-3 complex interacts with pix.

It localises to the cytoplasm. Functionally, mRNA cap-binding component of the eukaryotic translation initiation factor 3 (eIF-3) complex, which is involved in protein synthesis of a specialized repertoire of mRNAs and, together with other initiation factors, stimulates binding of mRNA and methionyl-tRNAi to the 40S ribosome. The eIF-3 complex specifically targets and initiates translation of a subset of mRNAs involved in cell proliferation. In the eIF-3 complex, eif3d specifically recognizes and binds the 7-methylguanosine cap of a subset of mRNAs. The sequence is that of Eukaryotic translation initiation factor 3 subunit D-2 from Drosophila ananassae (Fruit fly).